Reading from the N-terminus, the 86-residue chain is RNA-binding protein Hfq (86 aa).

Residues 9 to 68 form the Sm domain; it reads DPYLNTLRKEKVPVSIYLVNGIKLQGSIESFDQFVVLLKNTVSQMVYKHAISTVVPARPV. Residues 67–86 are disordered; sequence PVRLPSPTDGEHGDSEPGNA. The span at 75–86 shows a compositional bias: basic and acidic residues; it reads DGEHGDSEPGNA.

This sequence belongs to the Hfq family. As to quaternary structure, homohexamer.

RNA chaperone that binds small regulatory RNA (sRNAs) and mRNAs to facilitate mRNA translational regulation in response to envelope stress, environmental stress and changes in metabolite concentrations. Also binds with high specificity to tRNAs. The sequence is that of RNA-binding protein Hfq from Pseudomonas putida (strain GB-1).